The sequence spans 451 residues: UDP-N-acetylmuramate--L-alanine ligase (451 aa).

110-116 (GTHGKTT) contributes to the ATP binding site.

The protein belongs to the MurCDEF family.

It is found in the cytoplasm. It carries out the reaction UDP-N-acetyl-alpha-D-muramate + L-alanine + ATP = UDP-N-acetyl-alpha-D-muramoyl-L-alanine + ADP + phosphate + H(+). Its pathway is cell wall biogenesis; peptidoglycan biosynthesis. Cell wall formation. This is UDP-N-acetylmuramate--L-alanine ligase from Francisella tularensis subsp. tularensis (strain WY96-3418).